Reading from the N-terminus, the 204-residue chain is Urease accessory protein UreG (204 aa).

11–18 is a GTP binding site; that stretch reads GPVGAGKT.

Belongs to the SIMIBI class G3E GTPase family. UreG subfamily. In terms of assembly, homodimer. UreD, UreF and UreG form a complex that acts as a GTP-hydrolysis-dependent molecular chaperone, activating the urease apoprotein by helping to assemble the nickel containing metallocenter of UreC. The UreE protein probably delivers the nickel.

It localises to the cytoplasm. Functionally, facilitates the functional incorporation of the urease nickel metallocenter. This process requires GTP hydrolysis, probably effectuated by UreG. The polypeptide is Urease accessory protein UreG (Staphylococcus aureus (strain Mu3 / ATCC 700698)).